An 811-amino-acid polypeptide reads, in one-letter code: MTFLPLLFIFFFLTSIPFPAFSQYNDRSTLLNLKRDLGDPLSLRLWNDTSSPCNWPRITCTAGNVTEINFQNQNFTGTVPTTICNFPNLKSLNLSFNYFAGEFPTVLYNCTKLQYLDLSQNLFNGSLPDDINRLAPKLKYLDLAANSFAGDIPKNIGRISKLKVLNLYMSEYDGTFPSEIGDLSELEELQLALNDKFTPVKLPTEFGKLKKLKYMWLEEMNLIGEISAVVFENMTDLKHVDLSVNNLTGRIPDVLFGLKNLTELYLFANDLTGEIPKSISAKNLVHLDLSANNLNGSIPESIGNLTNLELLYLFVNELTGEIPRAIGKLPELKELKLFTNKLTGEIPAEIGFISKLERFEVSENQLTGKLPENLCHGGKLQSVIVYSNNLTGEIPESLGDCETLSSVLLQNNGFSGSVTISNNTRSNNNFTGKIPSFICELHSLILLDLSTNKFNGSIPRCIANLSTLEVLNLGKNHLSGSIPENISTSVKSIDIGHNQLAGKLPRSLVRISSLEVLNVESNKINDTFPFWLDSMQQLQVLVLRSNAFHGSINQNGFSKLRIIDISGNHFNGTLPLDFFVNWTAMFSLGKIEDQYMGTNYMRTNYYSDSIVVMIKGIALEMVRILNTFTTIDFSGNKFEGEIPRSVGLLKELHVLNLSNNGFTGHIPSSMGNLIELESLDVSQNKLSGEIPPELGKLSYLAYMNFSQNQFVGLVPGGTQFQTQPCSSFADNPRLFGLSLERVCVDIHKKTPQQSEMPEPEEDEEEVMNWTAAAIGSIPGISIGLTMGYILVSYKPEWLMNSGRNKRRIKPI.

An N-terminal signal peptide occupies residues 1-22 (MTFLPLLFIFFFLTSIPFPAFS). The Extracellular segment spans residues 23 to 770 (QYNDRSTLLN…EDEEEVMNWT (748 aa)). Residues Asn-47, Asn-64, Asn-74, Asn-93, Asn-109, and Asn-124 are each glycosylated (N-linked (GlcNAc...) asparagine). 6 LRR repeats span residues 62–86 (AGNV…ICNF), 87–110 (PNLK…LYNC), 112–134 (KLQY…INRL), 135–159 (APKL…IGRI), 161–183 (KLKV…IGDL), and 184–208 (SELE…EFGK). Residues 211–233 (KLKYMWLEEMNLIGEISAVVFEN) form an LRR 7; degenerate repeat. N-linked (GlcNAc...) asparagine glycosylation is found at Asn-233, Asn-246, Asn-260, Asn-295, and Asn-304. LRR repeat units lie at residues 234–258 (MTDL…LFGL), 260–281 (NLTE…SISA), 282–305 (KNLV…IGNL), 307–329 (NLEL…IGKL), 330–354 (PELK…GFIS), 356–377 (LERF…LCHG), 379–401 (KLQS…LGDC), and 403–427 (TLSS…TRSN). Asn-389, Asn-422, Asn-429, Asn-455, Asn-464, and Asn-485 each carry an N-linked (GlcNAc...) asparagine glycan. LRR repeat units lie at residues 441–465 (LHSL…IANL), 466–489 (STLE…ISTS), 491–511 (KSID…LVRI), 512–537 (SSLE…SMQQ), 539–557 (QVLV…QNGF), 558–581 (SKLR…FFVN), 625–649 (LNTF…VGLL), 650–673 (KELH…MGNL), 674–697 (IELE…LGKL), and 699–722 (YLAY…QFQT). N-linked (GlcNAc...) asparagine glycosylation is present at Asn-525. 2 N-linked (GlcNAc...) asparagine glycosylation sites follow: Asn-571 and Asn-581. A glycan (N-linked (GlcNAc...) asparagine) is linked at Asn-656. N-linked (GlcNAc...) asparagine glycosylation is present at Asn-704. Residues 771–791 (AAAIGSIPGISIGLTMGYILV) traverse the membrane as a helical segment. Topologically, residues 792 to 811 (SYKPEWLMNSGRNKRRIKPI) are cytoplasmic.

It belongs to the RLP family.

The protein localises to the cell membrane. Functionally, required for defense against powdery mildew pathogen. The protein is Receptor-like protein 52 of Arabidopsis thaliana (Mouse-ear cress).